The chain runs to 479 residues: FAD-dependent monooxygenase sdcF (479 aa).

The 174-residue stretch at 40–213 folds into the FAD-binding PCMH-type domain; sequence AQLPPSCFVL…TLFDMEAFST (174 aa). A Pros-8alpha-FAD histidine modification is found at His-79.

The protein belongs to the oxygen-dependent FAD-linked oxidoreductase family. Requires FAD as cofactor.

The protein operates within secondary metabolite biosynthesis. In terms of biological role, FAD-dependent monooxygenase; part of the gene cluster that mediates the biosynthesis of the polyenes aspernidgulenes. The carbon backbone of aspernidgulenes is synthesized by the HR-PKS sdgA, which accepts acetyl-CoA as the starter unit and performs malonyl-CoA extensions as well as regioselective methylation and reduction. The resulting nonaketide offloads the HR-PKS by intramolecular lactonization to yield the 5,6-dihydro-alpha-pyrone-containing hexaenoic acids preaspernidgulene A1 and A2. The FAD-dependent monooxygenase sdgC then installs the first epoxide on the penultimate double bond. Subsequently, the FAD-dependent monooxygenase sdgF presumably generates a ketone intermediate through Meinwald rearrangement involving a hydride shift. Next, sdgC introduces another epoxide on the last olefin of the ketone intermediate after E/Z isomerization. The epoxide hydrolase sdgD then catalyzes stereospecific cyclization of the 5,6-dihydro-alpha-pyrone and opening of the epoxide ring to form an oxygenated trimethylcyclopentanone and an oxabicyclo[2.2.1]heptane unit. Finally, the bicyclic unit undergoes hydrolytic cleavage, either spontaneously or catalyzed by sdgD, to assemble the dimethyl-gamma-lactone moiety in aspernidgulene A1. The protein is FAD-dependent monooxygenase sdcF of Emericella nidulans (strain FGSC A4 / ATCC 38163 / CBS 112.46 / NRRL 194 / M139) (Aspergillus nidulans).